The following is a 238-amino-acid chain: MGRKWANIVAKKTAKDGATSKIYAKFGVEIYVAAKQGEPDPELNTALKFVIDRAKQAQVPKHVIDKAIDKAKGNTDETFVEGRYEGFGPNGSMIIVDTLTSNVNRTAANVRTAYGKNGGNMGASGSVSYLFDKKGVIVFAGDDADSVFEQLLEADVDVDDVEAEEGTITVYTAPTDLHKGIQALRDNGVEEFQVTELEMIPQSEVVLEGDDLETFEKLIDALESDDDVQKVYHNVADF.

It belongs to the TACO1 family. YeeN subfamily.

It is found in the cytoplasm. This is Probable transcriptional regulatory protein MGAS10750_Spy0264 from Streptococcus pyogenes serotype M4 (strain MGAS10750).